The primary structure comprises 426 residues: D-tagatose-1,6-bisphosphate aldolase subunit KbaZ (426 aa).

It belongs to the GatZ/KbaZ family. KbaZ subfamily. Forms a complex with KbaY.

Its pathway is carbohydrate metabolism; D-tagatose 6-phosphate degradation; D-glyceraldehyde 3-phosphate and glycerone phosphate from D-tagatose 6-phosphate: step 2/2. In terms of biological role, component of the tagatose-1,6-bisphosphate aldolase KbaYZ that is required for full activity and stability of the Y subunit. Could have a chaperone-like function for the proper and stable folding of KbaY. When expressed alone, KbaZ does not show any aldolase activity. This Escherichia coli O1:K1 / APEC protein is D-tagatose-1,6-bisphosphate aldolase subunit KbaZ.